The primary structure comprises 442 residues: Circumsporozoite protein (442 aa).

A signal peptide spans 1–18; sequence MMRKLAILSVSSFLFVEA. Residues 69–357 are disordered; sequence SRSLGENDDG…VKNNNNEEPS (289 aa). Residues 81 to 94 show a composition bias toward low complexity; sequence DNGNNNNGNNNNGD. Residues 95 to 115 show a composition bias toward basic and acidic residues; that stretch reads NGREGKDEDKRDGNNEDNEKL. The tract at residues 114 to 121 is required for the binding to heparan sulfate proteoglycans (HSPGs) on the surface of host hepatocytes; the sequence is KLRKPKHK. A region I; contains the proteolytic cleavage site region spans residues 122 to 126; that stretch reads KLKQP. The span at 130–318 shows a compositional bias: low complexity; it reads NPDPNANPNV…PNANPNANPN (189 aa). 46 tandem repeats follow at residues 134-137, 138-141, 142-145, 146-149, 150-153, 154-157, 158-161, 162-165, 166-169, 170-173, 174-177, 178-181, 182-185, 186-189, 190-193, 194-197, 198-201, 202-205, 206-209, 210-213, 214-217, 218-221, 222-225, 226-229, 230-233, 234-237, 238-241, 242-245, 246-249, 250-253, 254-257, 258-261, 262-265, 266-269, 270-273, 274-277, 278-281, 282-285, 286-289, 290-293, 294-297, 298-301, 302-305, 306-309, 310-313, and 314-317. Positions 134–317 are 46 X 4 AA tandem repeats of N-[AV]-[ND]-P; the sequence is NANPNVDPNA…NPNANPNANP (184 aa). Residues 319–334 show a composition bias toward polar residues; sequence KNNQGNGQGHNMPNDP. The span at 340 to 354 shows a compositional bias: low complexity; sequence ENANANNAVKNNNNE. The region spanning 367–420 is the TSP type-1 domain; that stretch reads KIQNSLSTEWSPCSVTCGNGIQVRIKPGSADKPKDQLDYENDIEKKICKMEKCS. 2 disulfide bridges follow: cysteine 379-cysteine 414 and cysteine 383-cysteine 419. O-linked (Fuc) threonine glycosylation occurs at threonine 382. Residue cysteine 419 is the site of GPI-anchor amidated cysteine attachment. The propeptide at 420 to 442 is removed in mature form; it reads SSVFNVVNSSIGLIMVLSFLFLN.

Belongs to the plasmodium circumsporozoite protein family. During host cell invasion, proteolytically cleaved at the cell membrane in the region I by a papain-like cysteine protease of parasite origin. Cleavage is triggered by the sporozoite contact with highly sulfated heparan sulfate proteoglycans (HSPGs) present on the host hepatocyte cell surface. Cleavage exposes the TSP type-1 (TSR) domain and is required for productive invasion of host hepatocytes but not for adhesion to the host cell membrane. Cleavage is dispensable for sporozoite development in the oocyst, motility and for traversal of host and vector cells. Post-translationally, O-glycosylated; maybe by POFUT2.

Its subcellular location is the cell membrane. It is found in the cytoplasm. Functionally, essential sporozoite protein. In the mosquito vector, required for sporozoite development in the oocyst, migration through the vector hemolymph and entry into the vector salivary glands. In the vertebrate host, required for sporozoite migration through the host dermis and infection of host hepatocytes. Binds to highly sulfated heparan sulfate proteoglycans (HSPGs) on the surface of host hepatocytes. In terms of biological role, in the vertebrate host, binds to highly sulfated heparan sulfate proteoglycans (HSPGs) on the surface of host hepatocytes and is required for sporozoite invasion of the host hepatocytes. This is Circumsporozoite protein from Plasmodium falciparum (isolate Wellcome).